A 942-amino-acid polypeptide reads, in one-letter code: UvrABC system protein A (942 aa).

Position 32–39 (32–39) interacts with ATP; the sequence is GLSGSGKS. A C4-type zinc finger spans residues 251–278; the sequence is CPVCGFTVPELEPRLFSFNAPFGSCPTC. ABC transporter domains lie at 308–589 and 609–937; these read WNPI…KKSI and GNGR…HYLK. 641-648 contacts ATP; sequence GVSGSGKS. The C4-type zinc finger occupies 740 to 766; the sequence is CEACSGDGIIKIEMHFLPDVYVPCEVC.

It belongs to the ABC transporter superfamily. UvrA family. In terms of assembly, forms a heterotetramer with UvrB during the search for lesions.

It localises to the cytoplasm. Functionally, the UvrABC repair system catalyzes the recognition and processing of DNA lesions. UvrA is an ATPase and a DNA-binding protein. A damage recognition complex composed of 2 UvrA and 2 UvrB subunits scans DNA for abnormalities. When the presence of a lesion has been verified by UvrB, the UvrA molecules dissociate. The protein is UvrABC system protein A of Streptococcus pyogenes serotype M1.